A 397-amino-acid polypeptide reads, in one-letter code: P-selectin glycoprotein ligand 1 (397 aa).

The first 17 residues, 1–17 (MSPSFLVLLTILGPGNS), serve as a signal peptide directing secretion. The propeptide occupies 18-41 (LQLQDPWGHETKEAPGPVHLRERR). Residues 18–307 (LQLQDPWGHE…SSDLIPVKQC (290 aa)) lie on the Extracellular side of the membrane. At Y54 the chain carries Sulfotyrosine. O-linked (GalNAc...) threonine glycosylation is present at T58. N-linked (GlcNAc...) asparagine glycosylation is present at N66. A disordered region spans residues 89-261 (TSAGTSERAT…TMETASTESN (173 aa)). Polar residues predominate over residues 120–198 (STDSATQWSL…PMEAETSQPA (79 aa)). 10 consecutive repeat copies span residues 126–135 (QWSLTSVETV), 136–145 (QPASTEVETS), 146–155 (QPAPMEAETS), 156–165 (QPAPMEAETS), 166–175 (QPAPMEAETS), 176–185 (QPAPMEADTS), 186–195 (QPAPMEAETS), 196–205 (QPAPNEAETS), 206–215 (KPAPTEAETS), and 216–225 (KPAPTEAETT). The segment at 126 to 225 (QWSLTSVETV…KPAPTEAETT (100 aa)) is 10 X 10 AA tandem repeats. Polar residues predominate over residues 236 to 261 (LFTTSAATEVPSTEPTTMETASTESN). The N-linked (GlcNAc...) asparagine glycan is linked to N261. The helical transmembrane segment at 308-328 (LLIILILASLATIFLVCTVVL) threads the bilayer. The Cytoplasmic segment spans residues 329–397 (AVRLSRKTHM…DDLTLHSFLP (69 aa)). Residues 364–390 (PVTANGGLPKVQDLKTEPSGDRDGDDL) form a disordered region. Over residues 375–390 (QDLKTEPSGDRDGDDL) the composition is skewed to basic and acidic residues. T391 carries the post-translational modification Phosphothreonine. S394 carries the post-translational modification Phosphoserine.

In terms of assembly, homodimer; disulfide-linked. Interacts with P- and E-selectins, through their lectin/EGF domains. Interaction with P-selectin requires sialyl Lewis X glycan modification and tyrosine sulfation, probably on Tyr-54, for high affinity binding. Dimerization appears not to be required for P-selectin/SELP binding. Interacts with SNX20. Interacts with MSN and SYK; mediates SYK activation downstream of SELPLG. Interacts with HAVCR1. In terms of processing, displays complex, core-2, sialylated and fucosylated O-linked oligosaccharides, at least some of which appear to contain poly-N-acetyllactosamine with varying degrees of substitution. Mainly disialylated or neutral forms of the core-2 tetrasaccharide, Galbeta1--&gt;4GlcNAcbeta1--&gt;6(Galbeta1--&gt;3)GalNAcOH. The GlcN:GalN ratio is approximately 2:1 and the Man:Fuc ratio 3:5. Contains about 14% fucose with alpha-1,3 linkage present in two forms: One species is a disialylated, monofucosylated glycan, and the other, a monosialylated, trifucosylated glycan with a polylactosamine backbone. The fucosylated forms carry the Lewis antigen and are important for interaction with selectins and for functioning. No sulfated O-glycans. Some N-glycosylation. Highly expressed in blood, bone marrow, brain, adipose tissue, spleen, and thymus. Also expressed in heart, kidney, liver, muscle, ovary, and stomach.

Its subcellular location is the cell membrane. Functionally, a SLe(x)-type proteoglycan, which through high affinity, calcium-dependent interactions with E- and P-selectins, mediates rapid rolling of leukocytes over vascular surfaces during the initial steps in inflammation. Critical for the initial leukocyte capture. This Mus musculus (Mouse) protein is P-selectin glycoprotein ligand 1 (Selplg).